The following is a 1400-amino-acid chain: DNA-directed RNA polymerase subunit beta' (1400 aa).

Zn(2+) is bound by residues Cys71, Cys73, Cys86, and Cys89. Mg(2+) is bound by residues Asp462, Asp464, and Asp466. Zn(2+) contacts are provided by Cys820, Cys893, Cys900, and Cys903.

The protein belongs to the RNA polymerase beta' chain family. In terms of assembly, the RNAP catalytic core consists of 2 alpha, 1 beta, 1 beta' and 1 omega subunit. When a sigma factor is associated with the core the holoenzyme is formed, which can initiate transcription. It depends on Mg(2+) as a cofactor. The cofactor is Zn(2+).

The enzyme catalyses RNA(n) + a ribonucleoside 5'-triphosphate = RNA(n+1) + diphosphate. Its function is as follows. DNA-dependent RNA polymerase catalyzes the transcription of DNA into RNA using the four ribonucleoside triphosphates as substrates. In Methylobacterium sp. (strain 4-46), this protein is DNA-directed RNA polymerase subunit beta'.